The following is a 274-amino-acid chain: Copper chaperone for superoxide dismutase (274 aa).

One can recognise an HMA domain in the interval 11-74; the sequence is LCTLEFAVQM…LLEGTGRQAV (64 aa). Cu cation is bound by residues C22 and C25. K76 participates in a covalent cross-link: Glycyl lysine isopeptide (Lys-Gly) (interchain with G-Cter in ubiquitin). The interval 88–234 is superoxide dismutase-like; it reads AAVAILGGPG…LACGIIARSA (147 aa). An intrachain disulfide couples C141 to C227. 4 residues coordinate Zn(2+): H147, H155, H164, and D167. Residues K189, K216, and K241 each participate in a glycyl lysine isopeptide (Lys-Gly) (interchain with G-Cter in ubiquitin) cross-link. C244 and C246 together coordinate Cu cation. S267 carries the phosphoserine modification.

The protein in the C-terminal section; belongs to the Cu-Zn superoxide dismutase family. In terms of assembly, homodimer, and heterodimer with SOD1. Interacts with COMMD1. Interacts with XIAP/BIRC4. Interacts with SLC31A1(via C-terminal domain); this interaction is Cu(1+)-mediated. The heterodimer CCS:SOD1 interacts with SLC31A1; this heterotrimer is Cu(1+)-mediated and its maintenance is regulated through SOD1 activation. The cofactor is Cu(2+). It depends on Zn(2+) as a cofactor. In terms of processing, ubiquitinion by XIAP/BIRC4 leads to enhancement of its chaperone activity toward its physiologic target, SOD1, rather than proteasomal degradation. XIAP/BIRC4 preferentially ubiquitinates at Lys-241. As to expression, ubiquitous.

The protein localises to the cytoplasm. Its function is as follows. Delivers copper to copper zinc superoxide dismutase (SOD1). The chain is Copper chaperone for superoxide dismutase from Homo sapiens (Human).